Here is a 188-residue protein sequence, read N- to C-terminus: Elongation factor P (188 aa).

The protein belongs to the elongation factor P family.

It localises to the cytoplasm. It functions in the pathway protein biosynthesis; polypeptide chain elongation. Functionally, involved in peptide bond synthesis. Stimulates efficient translation and peptide-bond synthesis on native or reconstituted 70S ribosomes in vitro. Probably functions indirectly by altering the affinity of the ribosome for aminoacyl-tRNA, thus increasing their reactivity as acceptors for peptidyl transferase. This Bdellovibrio bacteriovorus (strain ATCC 15356 / DSM 50701 / NCIMB 9529 / HD100) protein is Elongation factor P.